We begin with the raw amino-acid sequence, 243 residues long: Calcium-binding protein LPS1-beta (243 aa).

EF-hand domains are found at residues 15–49 (EVIDAMKQEFKDNYDTNKDGTVSCAELAKLMDCPE), 47–82 (CPEEEAQRIITGVDVNCDGRMQFDEFLLYMEGYTKE), 85–120 (YSSDEIKQMFDDLDKDGNGRISPDELSKGVGEISTK), 121–156 (LVEGMANKLIQEADKDGDGHVNMEEFVDTLVAKLPL), 157–189 (CFKKCFHEDFDKNGDGSLTNAEMSQLLNRNLPG), 191–226 (YSEELINEMISRVDLNGDGRVQFGEFLMHAQNLSKD), and 227–243 (DIKNQFMAIDKDKNGKI). Aspartate 29, asparagine 31, aspartate 33, threonine 35, glutamate 40, aspartate 60, asparagine 62, aspartate 64, arginine 66, glutamate 71, aspartate 98, aspartate 100, asparagine 102, arginine 104, glutamate 109, aspartate 134, aspartate 136, aspartate 138, histidine 140, glutamate 145, aspartate 167, asparagine 169, aspartate 171, serine 173, glutamate 178, aspartate 204, asparagine 206, aspartate 208, arginine 210, and glutamate 215 together coordinate Ca(2+).

Aboral ectoderm, a squamous epithelium covering the surface of the late stage embryo and larva.

Functionally, calcium-binding protein involved in larval development and metamorphosis. Likely to function as calcium buffers mediating the transport of calcium from the sea water to the blastocoel where calcium is required for skeleton formation. The protein is Calcium-binding protein LPS1-beta of Lytechinus pictus (Painted sea urchin).